A 212-amino-acid chain; its full sequence is Interleukin-6 (212 aa).

Positions 1–27 (MNSVSTSAFGPVAFSLGLLLVLPAAFP) are cleaved as a signal peptide. Cys-72 and Cys-78 are joined by a disulfide. An N-linked (GlcNAc...) asparagine glycan is attached at Asn-73. Ser-81 is subject to Phosphoserine. Cys-101 and Cys-111 are disulfide-bonded. N-linked (GlcNAc...) asparagine glycosylation is present at Asn-172.

The protein belongs to the IL-6 superfamily. As to quaternary structure, component of a hexamer of two molecules each of IL6, IL6R and IL6ST; first binds to IL6R to associate with the signaling subunit IL6ST. Interacts with IL6R (via the N-terminal ectodomain); this interaction may be affected by IL6R-binding with SORL1, hence decreasing IL6 cis signaling. Interacts with SORL1 (via the N-terminal ectodomain); this interaction leads to IL6 internalization and lysosomal degradation. May form a trimeric complex with the soluble SORL1 ectodomain and soluble IL6R receptor; this interaction might stabilize circulating IL6, hence promoting IL6 trans signaling.

The protein resides in the secreted. Functionally, cytokine with a wide variety of biological functions in immunity, tissue regeneration, and metabolism. Binds to IL6R, then the complex associates to the signaling subunit IL6ST/gp130 to trigger the intracellular IL6-signaling pathway. The interaction with the membrane-bound IL6R and IL6ST stimulates 'classic signaling', whereas the binding of IL6 and soluble IL6R to IL6ST stimulates 'trans-signaling'. Alternatively, 'cluster signaling' occurs when membrane-bound IL6:IL6R complexes on transmitter cells activate IL6ST receptors on neighboring receiver cells. IL6 is a potent inducer of the acute phase response. Rapid production of IL6 contributes to host defense during infection and tissue injury, but excessive IL6 synthesis is involved in disease pathology. In the innate immune response, is synthesized by myeloid cells, such as macrophages and dendritic cells, upon recognition of pathogens through toll-like receptors (TLRs) at the site of infection or tissue injury. In the adaptive immune response, is required for the differentiation of B cells into immunoglobulin-secreting cells. Plays a major role in the differentiation of CD4(+) T cell subsets. Essential factor for the development of T follicular helper (Tfh) cells that are required for the induction of germinal-center formation. Required to drive naive CD4(+) T cells to the Th17 lineage. Also required for proliferation of myeloma cells and the survival of plasmablast cells. Its function is as follows. Acts as an essential factor in bone homeostasis and on vessels directly or indirectly by induction of VEGF, resulting in increased angiogenesis activity and vascular permeability. Induces, through 'trans-signaling' and synergistically with IL1B and TNF, the production of VEGF. Involved in metabolic controls, is discharged into the bloodstream after muscle contraction increasing lipolysis and improving insulin resistance. 'Trans-signaling' in central nervous system also regulates energy and glucose homeostasis. Mediates, through GLP-1, crosstalk between insulin-sensitive tissues, intestinal L cells and pancreatic islets to adapt to changes in insulin demand. Also acts as a myokine. Plays a protective role during liver injury, being required for maintenance of tissue regeneration. Also has a pivotal role in iron metabolism by regulating HAMP/hepcidin expression upon inflammation or bacterial infection. Through activation of IL6ST-YAP-NOTCH pathway, induces inflammation-induced epithelial regeneration. The sequence is that of Interleukin-6 (IL6) from Macaca thibetana (Pere David's macaque).